A 571-amino-acid chain; its full sequence is Urease subunit alpha (571 aa).

One can recognise a Urease domain in the interval 132–571 (GGIDAHIHFI…VALAQRYFLF (440 aa)). Ni(2+) is bound by residues histidine 137, histidine 139, and lysine 220. N6-carboxylysine is present on lysine 220. Substrate is bound at residue histidine 222. 2 residues coordinate Ni(2+): histidine 249 and histidine 275. Residue histidine 323 is the Proton donor of the active site. Position 363 (aspartate 363) interacts with Ni(2+).

It belongs to the metallo-dependent hydrolases superfamily. Urease alpha subunit family. As to quaternary structure, heterotrimer of UreA (gamma), UreB (beta) and UreC (alpha) subunits. Three heterotrimers associate to form the active enzyme. Ni cation serves as cofactor. Post-translationally, carboxylation allows a single lysine to coordinate two nickel ions.

The protein localises to the cytoplasm. The enzyme catalyses urea + 2 H2O + H(+) = hydrogencarbonate + 2 NH4(+). It functions in the pathway nitrogen metabolism; urea degradation; CO(2) and NH(3) from urea (urease route): step 1/1. The sequence is that of Urease subunit alpha from Halalkalibacterium halodurans (strain ATCC BAA-125 / DSM 18197 / FERM 7344 / JCM 9153 / C-125) (Bacillus halodurans).